The following is a 463-amino-acid chain: Fibrinogen beta chain (463 aa).

Residues Ala-1–Pro-12 are compositionally biased toward acidic residues. Residues Ala-1–Met-56 form a disordered region. The residue at position 5 (Tyr-5) is a Sulfotyrosine. Residues Ala-16–Glu-27 show a composition bias toward basic and acidic residues. 2 disulfide bridges follow: Cys-205–Cys-289 and Cys-215–Cys-244. The Fibrinogen C-terminal domain maps to Asn-206 to Phe-461. N-linked (GlcNAc...) asparagine glycosylation occurs at Asn-367. The Ca(2+) site is built by Asp-384, Asp-386, and Trp-388. Cys-397 and Cys-410 form a disulfide bridge.

Heterohexamer; disulfide linked. Contains 2 sets of 3 non-identical chains (alpha, beta and gamma). The 2 heterotrimers are in head to head conformation with the N-termini in a small central domain. In terms of processing, conversion of fibrinogen to fibrin is triggered by thrombin, which cleaves fibrinopeptides A and B from alpha and beta chains, and thus exposes the N-terminal polymerization sites responsible for the formation of the soft clot. The soft clot is converted into the hard clot by factor XIIIA which catalyzes the epsilon-(gamma-glutamyl)lysine cross-linking between gamma chains (stronger) and between alpha chains (weaker) of different monomers.

Its subcellular location is the secreted. Cleaved by the protease thrombin to yield monomers which, together with fibrinogen alpha (FGA) and fibrinogen gamma (FGG), polymerize to form an insoluble fibrin matrix. Fibrin has a major function in hemostasis as one of the primary components of blood clots. This is Fibrinogen beta chain (FGB) from Gallus gallus (Chicken).